The chain runs to 179 residues: Large ribosomal subunit protein uL6 (179 aa).

Belongs to the universal ribosomal protein uL6 family. Part of the 50S ribosomal subunit.

This protein binds to the 23S rRNA, and is important in its secondary structure. It is located near the subunit interface in the base of the L7/L12 stalk, and near the tRNA binding site of the peptidyltransferase center. In Treponema pallidum (strain Nichols), this protein is Large ribosomal subunit protein uL6.